A 535-amino-acid chain; its full sequence is Inositol 1,4,5-trisphosphate receptor-interacting protein-like 2 (535 aa).

Positions 1–32 are cleaved as a signal peptide; the sequence is MSVRYTLNLRVFWPLVTGLCTALVCLYHALRS. Topologically, residues 33 to 43 are extracellular; sequence SEDARAESPDG. The helical transmembrane segment at 44–64 threads the bilayer; that stretch reads ADSGFPLLKVAILLLLGYILL. Residues 65–535 are Cytoplasmic-facing; it reads RCRHAIRQRL…RIQGSPEDEP (471 aa). Serine 139 carries the phosphoserine modification.

Belongs to the ITPRIP family.

It is found in the membrane. The polypeptide is Inositol 1,4,5-trisphosphate receptor-interacting protein-like 2 (Itpripl2) (Mus musculus (Mouse)).